A 272-amino-acid chain; its full sequence is Shikimate dehydrogenase (NADP(+)) (272 aa).

Shikimate contacts are provided by residues 14-16 (SKS) and Thr61. Catalysis depends on Lys65, which acts as the Proton acceptor. Glu77 contacts NADP(+). Shikimate is bound by residues Asn86 and Asp102. Residues 126 to 130 (GAGGA), 149 to 154 (NRTVSR), and Met213 each bind NADP(+). Tyr215 lines the shikimate pocket. Gly237 provides a ligand contact to NADP(+).

The protein belongs to the shikimate dehydrogenase family. In terms of assembly, homodimer.

It carries out the reaction shikimate + NADP(+) = 3-dehydroshikimate + NADPH + H(+). It functions in the pathway metabolic intermediate biosynthesis; chorismate biosynthesis; chorismate from D-erythrose 4-phosphate and phosphoenolpyruvate: step 4/7. Involved in the biosynthesis of the chorismate, which leads to the biosynthesis of aromatic amino acids. Catalyzes the reversible NADPH linked reduction of 3-dehydroshikimate (DHSA) to yield shikimate (SA). The sequence is that of Shikimate dehydrogenase (NADP(+)) from Escherichia coli O139:H28 (strain E24377A / ETEC).